Consider the following 167-residue polypeptide: NADH-quinone oxidoreductase subunit B (167 aa).

Residues C40, C41, C105, and C134 each contribute to the [4Fe-4S] cluster site.

It belongs to the complex I 20 kDa subunit family. In terms of assembly, NDH-1 is composed of 14 different subunits. Subunits NuoB, C, D, E, F, and G constitute the peripheral sector of the complex. [4Fe-4S] cluster is required as a cofactor.

It is found in the cell inner membrane. The enzyme catalyses a quinone + NADH + 5 H(+)(in) = a quinol + NAD(+) + 4 H(+)(out). Functionally, NDH-1 shuttles electrons from NADH, via FMN and iron-sulfur (Fe-S) centers, to quinones in the respiratory chain. The immediate electron acceptor for the enzyme in this species is believed to be ubiquinone. Couples the redox reaction to proton translocation (for every two electrons transferred, four hydrogen ions are translocated across the cytoplasmic membrane), and thus conserves the redox energy in a proton gradient. This is NADH-quinone oxidoreductase subunit B from Campylobacter jejuni (strain RM1221).